Here is a 651-residue protein sequence, read N- to C-terminus: Meiotic expression up-regulated protein 6 (651 aa).

Basic and acidic residues-rich tracts occupy residues 1–12 (MSYEGREERPEQ) and 21–30 (VSEHNEHDSG). A disordered region spans residues 1–102 (MSYEGREERP…EKKSKKKAKD (102 aa)). Acidic residues predominate over residues 72 to 83 (TVDNIDPADDDP). Positions 90–102 (KVEEKKSKKKAKD) are enriched in basic and acidic residues. The PH domain occupies 194-261 (CRGLLFYSKS…WITDLKNAIA (68 aa)). 3 disordered regions span residues 365–430 (TVEA…GTPI), 468–514 (VATP…KGGN), and 587–630 (TIKP…QMPQ). 2 stretches are compositionally biased toward polar residues: residues 410-429 (ESTS…NGTP) and 478-490 (PSTA…SVVS). The span at 497–514 (KKAGKKHHRHHKKKKGGN) shows a compositional bias: basic residues. Low complexity predominate over residues 587–604 (TIKPETPLTPTTTPTPRT).

This chain is Meiotic expression up-regulated protein 6 (meu6), found in Schizosaccharomyces pombe (strain 972 / ATCC 24843) (Fission yeast).